Here is a 296-residue protein sequence, read N- to C-terminus: tRNA uridine(34) hydroxylase (296 aa).

In terms of domain architecture, Rhodanese spans 130–225 (RGDDVVFFDG…YGEAYGNDGY (96 aa)). Residue cysteine 185 is the Cysteine persulfide intermediate of the active site.

The protein belongs to the TrhO family.

The catalysed reaction is uridine(34) in tRNA + AH2 + O2 = 5-hydroxyuridine(34) in tRNA + A + H2O. In terms of biological role, catalyzes oxygen-dependent 5-hydroxyuridine (ho5U) modification at position 34 in tRNAs. The sequence is that of tRNA uridine(34) hydroxylase from Corynebacterium kroppenstedtii (strain DSM 44385 / JCM 11950 / CIP 105744 / CCUG 35717).